Here is a 268-residue protein sequence, read N- to C-terminus: Fibroblast growth factor 5 (268 aa).

A signal peptide spans Met1–Ala20. Residues Leu26–Trp81 are disordered. Positions Gly43–Gln80 are enriched in low complexity. An N-linked (GlcNAc...) asparagine glycan is attached at Asn110. Residues Val233–Asn255 are disordered.

Belongs to the heparin-binding growth factors family. In terms of assembly, interacts with FGFR1 and FGFR2. Affinity between fibroblast growth factors (FGFs) and their receptors is increased by heparan sulfate glycosaminoglycans that function as coreceptors. In terms of tissue distribution, expressed in neonatal brain.

It is found in the secreted. Plays an important role in the regulation of cell proliferation and cell differentiation. Required for normal regulation of the hair growth cycle. Functions as an inhibitor of hair elongation by promoting progression from anagen, the growth phase of the hair follicle, into catagen the apoptosis-induced regression phase. This chain is Fibroblast growth factor 5 (FGF5), found in Homo sapiens (Human).